A 295-amino-acid chain; its full sequence is 4-hydroxy-3-methylbut-2-enyl diphosphate reductase (295 aa).

Cys-12 serves as a coordination point for [4Fe-4S] cluster. His-43 and His-81 together coordinate (2E)-4-hydroxy-3-methylbut-2-enyl diphosphate. Positions 43 and 81 each coordinate dimethylallyl diphosphate. Residues His-43 and His-81 each coordinate isopentenyl diphosphate. Cys-103 contacts [4Fe-4S] cluster. His-131 serves as a coordination point for (2E)-4-hydroxy-3-methylbut-2-enyl diphosphate. Residue His-131 coordinates dimethylallyl diphosphate. His-131 contributes to the isopentenyl diphosphate binding site. Residue Glu-133 is the Proton donor of the active site. Residue Thr-171 coordinates (2E)-4-hydroxy-3-methylbut-2-enyl diphosphate. Residue Cys-199 coordinates [4Fe-4S] cluster. Residues Ser-227, Asn-229, and Ser-272 each contribute to the (2E)-4-hydroxy-3-methylbut-2-enyl diphosphate site. Positions 227, 229, and 272 each coordinate dimethylallyl diphosphate. Ser-227, Asn-229, and Ser-272 together coordinate isopentenyl diphosphate.

It belongs to the IspH family. [4Fe-4S] cluster is required as a cofactor.

It catalyses the reaction isopentenyl diphosphate + 2 oxidized [2Fe-2S]-[ferredoxin] + H2O = (2E)-4-hydroxy-3-methylbut-2-enyl diphosphate + 2 reduced [2Fe-2S]-[ferredoxin] + 2 H(+). The catalysed reaction is dimethylallyl diphosphate + 2 oxidized [2Fe-2S]-[ferredoxin] + H2O = (2E)-4-hydroxy-3-methylbut-2-enyl diphosphate + 2 reduced [2Fe-2S]-[ferredoxin] + 2 H(+). It participates in isoprenoid biosynthesis; dimethylallyl diphosphate biosynthesis; dimethylallyl diphosphate from (2E)-4-hydroxy-3-methylbutenyl diphosphate: step 1/1. It functions in the pathway isoprenoid biosynthesis; isopentenyl diphosphate biosynthesis via DXP pathway; isopentenyl diphosphate from 1-deoxy-D-xylulose 5-phosphate: step 6/6. Its function is as follows. Catalyzes the conversion of 1-hydroxy-2-methyl-2-(E)-butenyl 4-diphosphate (HMBPP) into a mixture of isopentenyl diphosphate (IPP) and dimethylallyl diphosphate (DMAPP). Acts in the terminal step of the DOXP/MEP pathway for isoprenoid precursor biosynthesis. The sequence is that of 4-hydroxy-3-methylbut-2-enyl diphosphate reductase from Symbiobacterium thermophilum (strain DSM 24528 / JCM 14929 / IAM 14863 / T).